We begin with the raw amino-acid sequence, 342 residues long: Tetraacyldisaccharide 4'-kinase (342 aa).

68–75 (TVGGTGKT) provides a ligand contact to ATP.

The protein belongs to the LpxK family.

The enzyme catalyses a lipid A disaccharide + ATP = a lipid IVA + ADP + H(+). It participates in glycolipid biosynthesis; lipid IV(A) biosynthesis; lipid IV(A) from (3R)-3-hydroxytetradecanoyl-[acyl-carrier-protein] and UDP-N-acetyl-alpha-D-glucosamine: step 6/6. In terms of biological role, transfers the gamma-phosphate of ATP to the 4'-position of a tetraacyldisaccharide 1-phosphate intermediate (termed DS-1-P) to form tetraacyldisaccharide 1,4'-bis-phosphate (lipid IVA). This chain is Tetraacyldisaccharide 4'-kinase, found in Burkholderia lata (strain ATCC 17760 / DSM 23089 / LMG 22485 / NCIMB 9086 / R18194 / 383).